The chain runs to 625 residues: Adenine deaminase 2 (625 aa).

The protein belongs to the metallo-dependent hydrolases superfamily. Adenine deaminase family. Mn(2+) is required as a cofactor.

The catalysed reaction is adenine + H2O + H(+) = hypoxanthine + NH4(+). The sequence is that of Adenine deaminase 2 from Bradyrhizobium diazoefficiens (strain JCM 10833 / BCRC 13528 / IAM 13628 / NBRC 14792 / USDA 110).